The primary structure comprises 96 residues: Myticin-A (96 aa).

The signal sequence occupies residues 1–20; sequence MKATILLAVLVAVFVAGTEA. Positions 61-96 are cleaved as a propeptide — removed in mature form; the sequence is VNNPFRVNQVAKSINDLDYTPIMKSMENLDNGMDML.

Post-translationally, contains four disulfide bonds. Hemocytes.

It is found in the secreted. Functionally, bacteriolytic activity against Gram-positive bacteria M.luteus, B.megaterium and A.viridans. This is Myticin-A from Mytilus galloprovincialis (Mediterranean mussel).